The sequence spans 226 residues: Transmembrane 4 L6 family member 20 (226 aa).

Residues 1 to 14 (MTCCEGWTSCNGFS) lie on the Lumenal side of the membrane. Residues 15–35 (LLILILLGVVINCIPLGISLV) form a helical membrane-spanning segment. The Cytoplasmic portion of the chain corresponds to 36–49 (EADSTSQNPISCYE). A helical membrane pass occupies residues 50 to 70 (WWFPGIIGAGLMAIPATTMSL). Residues 71–83 (AARKRACCNNKTG) are Lumenal-facing. Residues 84–104 (MFLSSLFSVITVVGAVYCMLV) form a helical membrane-spanning segment. The Cytoplasmic segment spans residues 105–191 (SLQALLEGPL…RIFHFSVFMS (87 aa)). The helical transmembrane segment at 192 to 212 (LLLVGILELLFGLSQILIGFL) threads the bilayer. Topologically, residues 213–226 (GCLCGVSQRRSQIV) are lumenal.

This sequence belongs to the L6 tetraspanin family. Post-translationally, glycosylated at Asn-132, Asn-148 and Asn-163 in presence of ceramide which inverts the orientation of TM4SF20 in membranes exposing these residues to the endoplasmic reticulum lumen. Cleaved by signal peptidase at Ser-14 but the peptide does not act as a signal peptide. Cleavage is inhibited by ceramide which inverts the orientation of TM4SF20 in membranes exposing the N-terminus to the cytosol and not to the endoplasmic reticulum lumen.

The protein localises to the membrane. It is found in the endoplasmic reticulum membrane. Its function is as follows. Polytopic transmembrane protein. Inhibits regulated intramembrane proteolysis (RIP) of CREB3L1, inhibiting its activation and the induction of collagen synthesis. In response to ceramide, which alters TM4SF20 membrane topology, stimulates RIP activation of CREB3L1. Ceramide reverses the direction through which transmembrane helices are translocated into the endoplasmic reticulum membrane during translation of TM4SF20, this mechanism is called 'regulated alternative translocation' (RAT) and regulates the function of the transmembrane protein. The chain is Transmembrane 4 L6 family member 20 (Tm4sf20) from Mus musculus (Mouse).